A 226-amino-acid chain; its full sequence is CASP-like protein 2BC1 (226 aa).

The Cytoplasmic segment spans residues 1 to 37 (MRKHIDIVFSRLSGPILNPPPDNNVIPKTDRKLRITE). The chain crosses the membrane as a helical span at residues 38–58 (VILRFAVVIFALVSAIMVGTA). Over 59–78 (SGTRDLGGGIRIHAHFTLLK) the chain is Extracellular. The chain crosses the membrane as a helical span at residues 79–99 (TLPFLVIVDGILAVYSLLQGL). At 100–114 (RCFLSLYMRHILLNK) the chain is on the cytoplasmic side. The chain crosses the membrane as a helical span at residues 115-135 (ALAWTIFCCDQALAYVIFAAA). Residues 136-170 (ASTAETAYISEQGLDELQWIKVCMFFRAYCFKSGA) are Extracellular-facing. Residues 171-191 (GMINAFLAALCMVFVSGMSVF) traverse the membrane as a helical segment. Topologically, residues 192–226 (HLFRLYGEKRAYGHIAEQVVISEEAAERRNSLNGI) are cytoplasmic.

Belongs to the Casparian strip membrane proteins (CASP) family. In terms of assembly, homodimer and heterodimers.

The protein resides in the cell membrane. The polypeptide is CASP-like protein 2BC1 (Picea sitchensis (Sitka spruce)).